A 167-amino-acid polypeptide reads, in one-letter code: Ubiquitin-fold modifier-conjugating enzyme 1 (167 aa).

Cys-116 serves as the catalytic Glycyl thioester intermediate. Lys-122 is covalently cross-linked (Glycyl lysine isopeptide (Lys-Gly) (interchain with G-Cter in UFM1)).

The protein belongs to the ubiquitin-conjugating enzyme family. UFC1 subfamily. As to quaternary structure, interacts with UBA5 (via C-terminus). Interacts with UFL1. Interacts with UFM1. Interacts with KIRREL3. Ufmylated at Lys-122. Deufmylated by UFSP1.

Functionally, E2-like enzyme which specifically catalyzes the second step in ufmylation. Accepts the ubiquitin-like modifier UFM1 from the E1 enzyme UBA5 and forms an intermediate with UFM1 via a thioester linkage. Ufmylation is involved in various processes, such as ribosome recycling, response to DNA damage, interferon response or reticulophagy (also called ER-phagy). This is Ubiquitin-fold modifier-conjugating enzyme 1 from Homo sapiens (Human).